The sequence spans 982 residues: Hunchback-like protein (982 aa).

Residues 87 to 194 (QPGEKIHPDG…SNYQVTSEPV (108 aa)) form a disordered region. Residues 101–110 (PKEDGRKSSE) are compositionally biased toward basic and acidic residues. A compositionally biased stretch (polar residues) spans 111 to 132 (HTNSYDVSASQSPSNDGAQSDS). Positions 142–152 (CMTETEMDTDE) are enriched in acidic residues. Positions 153–175 (KDSTIKPEDQATPKLEEGSDSKP) are enriched in basic and acidic residues. Polar residues predominate over residues 176–193 (ESTSVEGTSSNYQVTSEP). C2H2-type zinc fingers lie at residues 336–358 (LVCP…MNTH), 361–384 (HQCS…RESH), 538–560 (FKCK…ARTH), 567–589 (LNCQ…YRNH), 595–617 (FQCK…MKSH), 623–647 (FRCM…KYNH), and 734–756 (LKCS…SMSH). The disordered stretch occupies residues 377–415 (KKHMRESHTVEEQLRAGFESEPAKESASSPKNLSLSKDG). The disordered stretch occupies residues 811 to 896 (EEMDQGSDSA…PPLHSSSIVA (86 aa)). Polar residues-rich tracts occupy residues 816–831 (GSDS…QISS) and 843–862 (SLEQ…SNDS). Positions 863-875 (AMEKDGESADDAP) are enriched in basic and acidic residues. 2 C2H2-type zinc fingers span residues 929–951 (FYCD…MRFH) and 957–981 (FMCS…QARH).

This sequence belongs to the hunchback C2H2-type zinc-finger protein family. As to expression, expressed primarily in ectodermal cells during embryonic and larval development.

It localises to the nucleus. Its function is as follows. Required for the late stages of development. Plays a role in the developmental timing of postembryonic hypodermal seam cell fusion events and adult alae production. The chain is Hunchback-like protein from Caenorhabditis elegans.